A 410-amino-acid chain; its full sequence is Diguanylate cyclase DgcM (410 aa).

PAS domains follow at residues 3–70 and 129–198; these read THNF…NQHD and GFYA…HLPG. Residues 199–251 enclose the PAC domain; it reads GHKPLNFVHKLADGSTRHVQTYAGPIEIYGDKLMLCIVHDITEQKRLEEQLEH. Residues 283–410 form the GGDEF domain; sequence QDYSLLLIDT…NDGRNRVLAA (128 aa). Residue D291 participates in Mg(2+) binding. Positions 299, 304, and 308 each coordinate substrate. E334 is a binding site for Mg(2+). E334 acts as the Proton acceptor in catalysis.

Forms homodimers and homotetramers. Interacts with PdeR and MlrA. The cofactor is Mg(2+).

The enzyme catalyses 2 GTP = 3',3'-c-di-GMP + 2 diphosphate. Its pathway is purine metabolism; 3',5'-cyclic di-GMP biosynthesis. With respect to regulation, activity is inhibited by the phosphodiesterase PdeR. Inhibition is relieved by high cellular c-di-GMP levels. Its function is as follows. Part of a signaling cascade that regulates curli biosynthesis. The cascade is composed of two cyclic-di-GMP (c-di-GMP) control modules, in which c-di-GMP controlled by the DgcE/PdeH pair (module I) regulates the activity of the DgcM/PdeR pair (module II), which in turn regulates activity of the transcription factor MlrA and expression of the master biofilm regulator csgD. DgcM stimulates activity of MlrA by direct interaction, leading to the transcription of csgD. It also catalyzes the synthesis of c-di-GMP via the condensation of 2 GTP molecules, which contributes to the c-di-GMP pool generated by module I in a positive feedback loop. Production of c-di-GMP contributes to but is not essential for MlrA activation. The sequence is that of Diguanylate cyclase DgcM from Escherichia coli (strain K12).